We begin with the raw amino-acid sequence, 576 residues long: MDEQIIFCDGFEVVPSPEINDLILYECDQSLTNSEVTTDEEEDTIFSGGDSSSGLAAEEDSSGDKPLSFYIVKQPVYDNPEIKAKIDEANQEIFRCNELRINVLSAKKSELAEVSSLYTQMESLVPQSEGYRMVIEEKKKEFDTLLEALRNLRCTTSDQLCFTKEELDHLSYIAQYQIEYGSIGLEEEDWMLKETEKPDGIILSEKEASINRVKSMALELNEVKNELDAITWKINDLSDKLWKSQNNIRVLDLEKAHILEKRDRFYARIKMLRIQRDKGNAAFFQSLSVMCKAKELAASGNVRELEVFASSEVDRFMTLWNDDKAFREDYVRRISHSLCERELNEDGRIKDADLQIFWEKKVPVKTIKRSEKVHKMNREDSSSNSSEDGNVITDKRKKETKSDVIVYEKPKKKEEEIDEEALKERKREEQLEKARLVMERKRKLQEKAAAKAAIRAQKEAEKKLKAIILSCSHFFNECEKKAKKKAAANSTSPSESDQVINDEKVRTLAVSGKEKHQKERLLFPKQRSFRYKHRGSGTEALPKAILNRRKARRYWVWGLSSAALAVSLVLVVLLLR.

The segment at 34-63 (SEVTTDEEEDTIFSGGDSSSGLAAEEDSSG) is disordered. Coiled coils occupy residues 132–155 (RMVI…LRCT) and 205–241 (EKEA…SDKL). Over residues 369 to 381 (RSEKVHKMNREDS) the composition is skewed to basic and acidic residues. The interval 369–395 (RSEKVHKMNREDSSSNSSEDGNVITDK) is disordered. Residues 411–467 (KKKEEEIDEEALKERKREEQLEKARLVMERKRKLQEKAAAKAAIRAQKEAEKKLKAI) adopt a coiled-coil conformation. A helical transmembrane segment spans residues 555–575 (WVWGLSSAALAVSLVLVVLLL).

The protein belongs to the plant Proton pump-interactor protein family.

It is found in the cell membrane. Its subcellular location is the endoplasmic reticulum membrane. Its function is as follows. May regulate plasma membrane ATPase activity. The polypeptide is Proton pump-interactor 3B (PPI3B) (Arabidopsis thaliana (Mouse-ear cress)).